The sequence spans 1029 residues: Myosin phosphatase Rho-interacting protein (1029 aa).

The segment at 1–387 (MSAAKENPCR…DRRSTESSMT (387 aa)) is interaction with F-actin. In terms of domain architecture, PH 1 spans 43–150 (KPIYGGWLLL…WLEMLMVYPR (108 aa)). The interval 152–267 (NKQNQKKKRK…GDRVDGGRKV (116 aa)) is disordered. Residues 179–195 (SSSGGSSGSSSSSSSSS) show a composition bias toward low complexity. Residues S198, S224, S226, S230, and S232 each carry the phosphoserine modification. Residues 226 to 237 (SPVQSPSQSQPP) are compositionally biased toward low complexity. Basic and acidic residues predominate over residues 245 to 267 (TGLDSKEDENILSGDRVDGGRKV). Phosphoserine is present on residues S271, S275, S294, and S297. 2 disordered regions span residues 279–306 (AKQD…SRRS) and 333–383 (PSSD…RSTE). T300 carries the post-translational modification Phosphothreonine. A compositionally biased stretch (basic and acidic residues) spans 338-354 (RQGRSERRAIPRKRDFA). S369 bears the Phosphoserine mark. Residues 391 to 487 (LNFKKGWLTK…WIQTIMKHVL (97 aa)) form the PH 2 domain. The segment at 490-614 (SAPDVTSSLP…NDGPGMEDTA (125 aa)) is disordered. A compositionally biased stretch (polar residues) spans 492–509 (PDVTSSLPEGKNKSTSFD). A Phosphoserine modification is found at S497. Residues 527–550 (PEQKKSRARERRREGRSKTFDWAE) are compositionally biased toward basic and acidic residues. Residues 550–828 (EFRPIQQALA…SVQRELEVLS (279 aa)) form an interaction with RHOA region. Residues 562–571 (RASTVGSSDS) are compositionally biased toward polar residues. Residues 583 to 592 (ELERERARRR) are compositionally biased toward basic and acidic residues. At S622 the chain carries Phosphoserine. T650 bears the Phosphothreonine mark. A coiled-coil region spans residues 675–979 (STHELTSLLE…LKAATEALGE (305 aa)). Phosphoserine is present on S804. Residues 828–883 (SEQYSQKCLENAHLAQALEAERQALRQCQRENQELNAHNQELNNRLAAEITRLRTL) form an interaction with PPP1R12A region. Phosphoserine is present on residues S981, S997, S1018, and S1020.

Binds RHOA, PPP1R12A/MBS and PPP1R12C/MBS85 through adjacent coiled coil domains. Interacts with MYZAP. Binds F-actin through its N-terminus.

It localises to the cytoplasm. It is found in the cytoskeleton. Targets myosin phosphatase to the actin cytoskeleton. Required for the regulation of the actin cytoskeleton by RhoA and ROCK1. Depletion leads to an increased number of stress fibers in smooth muscle cells through stabilization of actin fibers by phosphorylated myosin. Overexpression of MRIP as well as its F-actin-binding region leads to disassembly of stress fibers in neuronal cells. This is Myosin phosphatase Rho-interacting protein (Mprip) from Rattus norvegicus (Rat).